The following is a 151-amino-acid chain: Ribonuclease H (151 aa).

Residues 1-141 form the RNase H type-1 domain; it reads MQEVTVYSDG…ADALANKGVE (141 aa). Aspartate 9, glutamate 47, aspartate 69, and aspartate 133 together coordinate Mg(2+).

Belongs to the RNase H family. In terms of assembly, monomer. It depends on Mg(2+) as a cofactor.

Its subcellular location is the cytoplasm. It catalyses the reaction Endonucleolytic cleavage to 5'-phosphomonoester.. In terms of biological role, endonuclease that specifically degrades the RNA of RNA-DNA hybrids. In Ralstonia nicotianae (strain ATCC BAA-1114 / GMI1000) (Ralstonia solanacearum), this protein is Ribonuclease H.